A 736-amino-acid chain; its full sequence is Prolyl 3-hydroxylase 1 (736 aa).

A signal peptide spans 1–22 (MAVRALKLLTTLLAVVAAASQA). 4 TPR repeats span residues 35–68 (PDLL…RAAL), 143–176 (RSPY…NPEH), 205–238 (HMQE…YFVA), and 301–334 (PSHY…FPND). N-linked (GlcNAc...) asparagine glycosylation occurs at Asn316. The stretch at 401-439 (KRLQEKQKSERETAVRISQEIGNLMKEIETLVEEKTKES) forms a coiled coil. N-linked (GlcNAc...) asparagine glycosylation is found at Asn467 and Asn540. The Fe2OG dioxygenase domain maps to 564-678 (SHLVCRTAIE…RCAIALWFTL (115 aa)). Fe cation contacts are provided by His587, Asp589, and His659. Residue Arg669 is part of the active site. The disordered stretch occupies residues 699 to 736 (SPEEMDLSQEQPLDAQQGPPEPAQESLSGSESKPKDEL). Residues 733–736 (KDEL) carry the Prevents secretion from ER motif.

The protein belongs to the leprecan family. Fe cation is required as a cofactor. It depends on L-ascorbate as a cofactor. Post-translationally, O-glycosylated; chondroitin sulfate.

It is found in the endoplasmic reticulum. The protein localises to the secreted. It localises to the extracellular space. Its subcellular location is the extracellular matrix. The catalysed reaction is L-prolyl-[collagen] + 2-oxoglutarate + O2 = trans-3-hydroxy-L-prolyl-[collagen] + succinate + CO2. Functionally, basement membrane-associated chondroitin sulfate proteoglycan (CSPG). Has prolyl 3-hydroxylase activity catalyzing the post-translational formation of 3-hydroxyproline in -Xaa-Pro-Gly- sequences in collagens, especially types IV and V. May be involved in the secretory pathway of cells. Has growth suppressive activity in fibroblasts. The protein is Prolyl 3-hydroxylase 1 of Homo sapiens (Human).